Reading from the N-terminus, the 174-residue chain is Protein TM_1551 (174 aa).

The AMMECR1 domain occupies 2–174 (IGEHPYVKWA…IYRFTVERYK (173 aa)).

The protein is Protein TM_1551 of Thermotoga maritima (strain ATCC 43589 / DSM 3109 / JCM 10099 / NBRC 100826 / MSB8).